Consider the following 304-residue polypeptide: Aspartate carbamoyltransferase catalytic subunit (304 aa).

The carbamoyl phosphate site is built by Arg53 and Thr54. Residue Lys82 coordinates L-aspartate. Residues Arg103, His131, and Gln134 each coordinate carbamoyl phosphate. Residues Arg163 and Arg224 each coordinate L-aspartate. Residues Leu263 and Pro264 each contribute to the carbamoyl phosphate site.

This sequence belongs to the aspartate/ornithine carbamoyltransferase superfamily. ATCase family. As to quaternary structure, heterooligomer of catalytic and regulatory chains.

It carries out the reaction carbamoyl phosphate + L-aspartate = N-carbamoyl-L-aspartate + phosphate + H(+). It functions in the pathway pyrimidine metabolism; UMP biosynthesis via de novo pathway; (S)-dihydroorotate from bicarbonate: step 2/3. Functionally, catalyzes the condensation of carbamoyl phosphate and aspartate to form carbamoyl aspartate and inorganic phosphate, the committed step in the de novo pyrimidine nucleotide biosynthesis pathway. The sequence is that of Aspartate carbamoyltransferase catalytic subunit from Haloarcula marismortui (strain ATCC 43049 / DSM 3752 / JCM 8966 / VKM B-1809) (Halobacterium marismortui).